A 152-amino-acid chain; its full sequence is MKKDVLIERIEELVRPIVSELSCELYYVEYVKENGEFYLRIYIDKEGRVSLNDCEAVSRRVSEILDVEDPIKEAYYLEVSSPGLNRGLYKEEHFKKYIGSEVLIRLTSSLNGVKSVKGLLRDVSEDSILVEGETEIQIPRDKIKAANLEGEI.

Belongs to the RimP family.

It is found in the cytoplasm. Functionally, required for maturation of 30S ribosomal subunits. The chain is Ribosome maturation factor RimP from Clostridium beijerinckii (strain ATCC 51743 / NCIMB 8052) (Clostridium acetobutylicum).